Here is a 285-residue protein sequence, read N- to C-terminus: 4-diphosphocytidyl-2-C-methyl-D-erythritol kinase (285 aa).

Lys12 is a catalytic residue. 94–104 (PAQAGMGGGSS) is an ATP binding site. Asp136 is an active-site residue.

It belongs to the GHMP kinase family. IspE subfamily.

The enzyme catalyses 4-CDP-2-C-methyl-D-erythritol + ATP = 4-CDP-2-C-methyl-D-erythritol 2-phosphate + ADP + H(+). It participates in isoprenoid biosynthesis; isopentenyl diphosphate biosynthesis via DXP pathway; isopentenyl diphosphate from 1-deoxy-D-xylulose 5-phosphate: step 3/6. Its function is as follows. Catalyzes the phosphorylation of the position 2 hydroxy group of 4-diphosphocytidyl-2C-methyl-D-erythritol. This Paracidovorax citrulli (strain AAC00-1) (Acidovorax citrulli) protein is 4-diphosphocytidyl-2-C-methyl-D-erythritol kinase.